The primary structure comprises 315 residues: L-lactate dehydrogenase (315 aa).

Residues V14, D35, Y67, and 81-82 each bind NAD(+); that span reads GV. Substrate-binding positions include Q84, R91, and 123–126; that span reads NPVD. NAD(+)-binding positions include 121–123 and S146; that span reads ASN. 151-154 lines the substrate pocket; sequence DSAR. Residue H178 is the Proton acceptor of the active site. At Y219 the chain carries Phosphotyrosine. A substrate-binding site is contributed by T228.

This sequence belongs to the LDH/MDH superfamily. LDH family. As to quaternary structure, homotetramer.

The protein localises to the cytoplasm. It catalyses the reaction (S)-lactate + NAD(+) = pyruvate + NADH + H(+). It functions in the pathway fermentation; pyruvate fermentation to lactate; (S)-lactate from pyruvate: step 1/1. Functionally, catalyzes the conversion of lactate to pyruvate. This Malacoplasma penetrans (strain HF-2) (Mycoplasma penetrans) protein is L-lactate dehydrogenase.